A 1294-amino-acid chain; its full sequence is MEKSGPSSTISEQQLQRQEGWINTKTDLAEQSLISSEKWLQLHGLKSNKLTLKQILSQIGFPHCEDYVASLGRPVASRYADGLFPQLYRAEDGRVYNLTAKSELIYQFVEHLTQAVESYKQRMDWLTSKSRQIFGVILEQCVTIVLDFGGILEGELDLCREALTMVLQEQVAHITEFNIIRVSQEPVKWQENATPVTEQSIATAISWVEKLTVELTVSEAGRLDALLEAGRDKTIESIYYFVVGDVPEESKELLLQRALEIPCPVYTVSFNARGEGTIAFLKDLSAKTHSRFHAFAERTECVEFPAFSTKDGDNVMTWNSRKLKGKLPPGAGVREDVFLVWQEMEEACSTLAQIQRLVAEPPKPDVATVDCESETTSVEIASNPEDTWDSKTWLQKYGLKAQKLSLYDVLADCSFRHADGVVDIKAKPENESVQTSAETNKKTVHAKYCSRFVHAPWKDGSLVHVNITKEKCKWYSERIHTALARIRRRIKWLQDGSQSLFGRLHNDCIYILIDTSHSMKSKLDLVKDKIIQFIQEQLKYKSKFNFVKFDGQAVAWREQLAEVNEDNLEQAQSWIRDIKIGSSTNTLSALKTAFADKETQAIYLLTDGRPDQPPETVIDQVKRFQEIPIYTISFNYNDEIANRFLKEVAALTGGEFHFYNFGCKDPTPPEAVQNEDLTLLVKEMEQGHSDLEKMQDLYSESLIMDWWYNAEKDGDSKHQKEICSMISTPEKCAKPQSDVDSTQTSSLNMLKGPWGLSDQKVQKKKVLHAESTKTSLLRSQMSSLRSSACSERKDGLSNASSRRTALSDKEMSILLAEEWLDDKSSEKVTREGSQVYDHDSSDVSSENWLKTYGLVAKKLTLMDALSVAAVPHSSTYVPVLDKHVVSKVFDEVFPLAHVCNDTNKMTLINPQGAKLNIYKRKVEQAIQSYEKRLNKIVWRALSQEEKEKLDANKPIQYLENKTVLNQALERLNWPISLKELSMLESEILAGKMYIQQAMELQEAAKKNYANKAPGEQQKLQGNPTKKTKSKRPDPLKGQKVIARCDENGFYFPGVVKKCVSRTQALVGFSYGDTKVVSTSFITPVGGAMPCPLLQVGDYVFAKIVIPKGFDFYVPAIVIALPNKHVATEKFYTVLKCNNRREFCPRSALIKISQNKYALSCSHIKSPPIPEDPEVEDVEARNSAFLFWPLKEADTQDSREPRREKPRRKKRPAKQPLQQAAPSDSDGSSHGISSHGSCQGTHPEPRTAHLHFPAAGRLGLSSHAIIATPPPRAALPCTLQATHSSKGLRSVPETL.

The 177-residue stretch at 508–684 (CIYILIDTSH…EDLTLLVKEM (177 aa)) folds into the VWFA domain. Disordered regions lie at residues 732–754 (CAKP…KGPW), 778–803 (RSQM…SSRR), 1012–1036 (APGE…DPLK), and 1193–1247 (DTQD…PRTA). Positions 738 to 748 (DVDSTQTSSLN) are enriched in polar residues. A compositionally biased stretch (low complexity) spans 778–787 (RSQMSSLRSS). Residues 1193–1202 (DTQDSREPRR) show a composition bias toward basic and acidic residues. Positions 1203–1212 (EKPRRKKRPA) are enriched in basic residues. The span at 1213–1236 (KQPLQQAAPSDSDGSSHGISSHGS) shows a compositional bias: low complexity.

The protein resides in the cytoplasm. The protein is von Willebrand factor A domain-containing protein 3B (VWA3B) of Homo sapiens (Human).